A 178-amino-acid polypeptide reads, in one-letter code: Gluconokinase (178 aa).

19–26 (GVSGTGKT) provides a ligand contact to ATP.

It belongs to the gluconokinase GntK/GntV family. As to quaternary structure, monomer.

The catalysed reaction is D-gluconate + ATP = 6-phospho-D-gluconate + ADP + H(+). It participates in carbohydrate acid metabolism; D-gluconate degradation. Its activity is regulated as follows. Activated by magnesium. Its function is as follows. Phosphorylates gluconate to 6-phosphogluconate. The sequence is that of Gluconokinase from Gluconobacter oxydans (strain 621H) (Gluconobacter suboxydans).